The chain runs to 291 residues: 3-hydroxy-5-phosphonooxypentane-2,4-dione thiolase (291 aa).

Residue Lys203 is the Schiff-base intermediate with substrate of the active site.

The protein belongs to the DeoC/FbaB aldolase family. In terms of assembly, homodecamer.

The protein localises to the cytoplasm. The catalysed reaction is dihydroxyacetone phosphate + acetyl-CoA = 3-hydroxy-2,4-dioxopentyl phosphate + CoA. Its function is as follows. Involved in the degradation of phospho-AI-2, thereby terminating induction of the lsr operon and closing the AI-2 signaling cycle. Catalyzes the transfer of an acetyl moiety from 3-hydroxy-5-phosphonooxypentane-2,4-dione to CoA to form glycerone phosphate and acetyl-CoA. The sequence is that of 3-hydroxy-5-phosphonooxypentane-2,4-dione thiolase from Photorhabdus laumondii subsp. laumondii (strain DSM 15139 / CIP 105565 / TT01) (Photorhabdus luminescens subsp. laumondii).